The sequence spans 436 residues: 3-ketoacyl-CoA thiolase (436 aa).

The active-site Acyl-thioester intermediate is the C99. Active-site proton acceptor residues include H392 and C422.

The protein belongs to the thiolase-like superfamily. Thiolase family. Heterotetramer of two alpha chains (FadJ) and two beta chains (FadI).

The protein localises to the cytoplasm. It catalyses the reaction an acyl-CoA + acetyl-CoA = a 3-oxoacyl-CoA + CoA. Its pathway is lipid metabolism; fatty acid beta-oxidation. Functionally, catalyzes the final step of fatty acid oxidation in which acetyl-CoA is released and the CoA ester of a fatty acid two carbons shorter is formed. The sequence is that of 3-ketoacyl-CoA thiolase from Escherichia coli (strain ATCC 8739 / DSM 1576 / NBRC 3972 / NCIMB 8545 / WDCM 00012 / Crooks).